Reading from the N-terminus, the 655-residue chain is Fructose-1,6-bisphosphatase class 3 (655 aa).

The protein belongs to the FBPase class 3 family. It depends on Mn(2+) as a cofactor.

The enzyme catalyses beta-D-fructose 1,6-bisphosphate + H2O = beta-D-fructose 6-phosphate + phosphate. Its pathway is carbohydrate biosynthesis; gluconeogenesis. In Porphyromonas gingivalis (strain ATCC BAA-308 / W83), this protein is Fructose-1,6-bisphosphatase class 3.